Reading from the N-terminus, the 924-residue chain is Exocyst complex component 2 (924 aa).

An IPT/TIG domain is found at 8 to 93 (PLVTGISPNE…GTSTVSFKLL (86 aa)). A coiled-coil region spans residues 240-260 (QKLENVLNRASNTADTLFQEV). Residues Ser431, Ser432, and Ser435 each carry the phosphoserine modification. Thr440 is modified (phosphothreonine). Lys454 bears the N6-acetyllysine mark. Ser888 bears the Phosphoserine mark.

This sequence belongs to the SEC5 family. The exocyst complex is composed of EXOC1, EXOC2, EXOC3, EXOC4, EXOC5, EXOC6, EXOC7 and EXOC8. Interacts with EXOC3L1. Interacts with GNEFR/DELGEF; this interaction occurs only in the presence of magnesium or manganese and is stimulated by dCTP or GTP. Interacts with RALA and RALB. Interacts with ARL13B; regulates ARL13B localization to the cilium membrane. Widely expressed with highest levels in brain and placenta.

The protein localises to the midbody. Its subcellular location is the midbody ring. Functionally, component of the exocyst complex involved in the docking of exocytic vesicles with fusion sites on the plasma membrane. This is Exocyst complex component 2 (EXOC2) from Homo sapiens (Human).